The chain runs to 196 residues: Carnitine operon protein CaiE (196 aa).

Residues 176–196 (LRQMEENRPRLQGTTDVAPKR) are disordered.

It belongs to the transferase hexapeptide repeat family.

It participates in amine and polyamine metabolism; carnitine metabolism. Overproduction of CaiE stimulates the activity of CaiB and CaiD. The polypeptide is Carnitine operon protein CaiE (Escherichia fergusonii (strain ATCC 35469 / DSM 13698 / CCUG 18766 / IAM 14443 / JCM 21226 / LMG 7866 / NBRC 102419 / NCTC 12128 / CDC 0568-73)).